We begin with the raw amino-acid sequence, 89 residues long: Small ribosomal subunit protein bS20 (89 aa).

The disordered stretch occupies residues 1–28; that stretch reads MTLANIKSAKKRAVQSEKRRQHNASQRS.

Belongs to the bacterial ribosomal protein bS20 family.

Binds directly to 16S ribosomal RNA. The sequence is that of Small ribosomal subunit protein bS20 from Haemophilus ducreyi (strain 35000HP / ATCC 700724).